Reading from the N-terminus, the 1481-residue chain is Cystic fibrosis transmembrane conductance regulator (1481 aa).

The Cytoplasmic segment spans residues 1–77; it reads MQRSPLEKAS…KLINALRRCF (77 aa). A helical membrane pass occupies residues 78 to 98; that stretch reads FWRFMFYGILLYLGEVTKAVQ. Residues 81–365 form the ABC transmembrane type-1 1 domain; sequence FMFYGILLYL…WAVQTWYDSL (285 aa). At 99–122 the chain is on the extracellular side; sequence PLLLGRIIASYDPDNKEERSIAIY. Residues 123-146 traverse the membrane as a helical segment; it reads LGIGLCLLFIVRTLLLHPAIFGLH. At 147-195 the chain is on the cytoplasmic side; the sequence is HIGMQMRIAMFSLIYKKTLKLSSRVLDKISIGQLVSLLSNNLNKFDEGL. A helical membrane pass occupies residues 196 to 216; the sequence is ALAHFVWIVPLQVALLMGLIW. Residues 217 to 222 lie on the Extracellular side of the membrane; sequence ELLQAS. The helical transmembrane segment at 223–243 threads the bilayer; sequence AFCGLGFLIVLALFQAGLGRM. Over 244 to 298 the chain is Cytoplasmic; that stretch reads MMKYRDQRAGKINERLVITSEMIENIQSVKAYCWEEAMEKMIENLRQTELKLTRK. The helical transmembrane segment at 299–319 threads the bilayer; that stretch reads AAYVRYFNSSAFFFSGFFVVF. The Extracellular segment spans residues 320-339; it reads LSVLPYALIKGIVLRKIFTT. A helical transmembrane segment spans residues 340–358; sequence ISFCIVLRMAVTRQFPWAV. The Cytoplasmic portion of the chain corresponds to 359-858; the sequence is QTWYDSLGAI…YLRYITVHKS (500 aa). Residues Trp401, Ser434, 458–465, and Gln493 each bind ATP; that span reads GSTGAGKT. Positions 423 to 646 constitute an ABC transporter 1 domain; that stretch reads NDDDSLFFSN…RPDFSSKLMG (224 aa). Residue Cys524 is the site of S-palmitoyl cysteine attachment. Ser549 and Ser660 each carry phosphoserine. The interval 654–831 is disordered R region; it reads SAERRNSILT…EEINEEDLKE (178 aa). Ser670 carries the phosphoserine; by PKA modification. Phosphoserine is present on Ser686. Lys688 participates in a covalent cross-link: Glycyl lysine isopeptide (Lys-Gly) (interchain with G-Cter in ubiquitin). Phosphoserine is present on residues Ser700 and Ser712. Thr717 carries the phosphothreonine modification. Phosphoserine occurs at positions 737, 753, 768, 790, 795, and 813. The chain crosses the membrane as a helical span at residues 859-879; that stretch reads LIFVLIWCLVIFLAEVAASLV. In terms of domain architecture, ABC transmembrane type-1 2 spans 859–1155; it reads LIFVLIWCLV…AVNSSIDVDS (297 aa). Over 880 to 918 the chain is Extracellular; it reads VLWFLGNTPPQDKGNSTYSRNNSYAVIITRTSSYYVFYI. Residues Asn894 and Asn900 are each glycosylated (N-linked (GlcNAc...) asparagine). The discontinuously helical transmembrane segment at 919 to 939 threads the bilayer; the sequence is YVGVADTLLAMGFFRGLPLVH. The Cytoplasmic segment spans residues 940–990; that stretch reads TLITVSKILHHKMLHSVLQAPMSTLNTLKAGGILNRFSKDIAILDDLLPLT. The helical transmembrane segment at 991 to 1011 threads the bilayer; that stretch reads IFDFIQLLLIVIGAIAVVAVL. Over 1012–1013 the chain is Extracellular; the sequence is QP. Residues 1014 to 1034 traverse the membrane as a helical segment; sequence YIFVATVPVIVAFIMLRAYFL. The Cytoplasmic segment spans residues 1035-1095; it reads QTSQQLKQLE…TANWFLYLST (61 aa). Residues 1096-1116 traverse the membrane as a helical segment; that stretch reads LRWFQMRIEMIFVIFFIAVTF. Residues 1117–1130 are Extracellular-facing; that stretch reads ISILTTGEGEGTVG. A helical membrane pass occupies residues 1131–1151; it reads IILTLAMNIMSTLQWAVNSSI. Residues 1152 to 1481 are Cytoplasmic-facing; the sequence is DVDSLMRSVS…TEEEVQDTRL (330 aa). Residues 1211-1444 form the ABC transporter 2 domain; that stretch reads MTVKDLTAKY…RSLFQQAISP (234 aa). Residues Tyr1220 and 1245 to 1252 each bind ATP; that span reads GRTGSGKS. Positions 1387–1481 are interaction with GORASP2; that stretch reads RTLKQAFADC…TEEEVQDTRL (95 aa). Residue Cys1396 is the site of S-palmitoyl cysteine attachment. 2 positions are modified to phosphoserine: Ser1445 and Ser1457. The PDZ-binding motif lies at 1479–1481; it reads TRL.

The protein belongs to the ABC transporter superfamily. ABCC family. CFTR transporter (TC 3.A.1.202) subfamily. As to quaternary structure, monomer; does not require oligomerization for channel activity. May form oligomers in the membrane. Interacts with SLC26A3, SLC26A6 and NHERF1. Interacts with SHANK2. Interacts with MYO6. Interacts (via C-terminus) with GOPC (via PDZ domain); this promotes CFTR internalization and thereby decreases channel activity. Interacts with SLC4A7 through NHERF1. Found in a complex with MYO5B and RAB11A. Interacts with ANO1. Interacts with SLC26A8. Interacts with AHCYL1; the interaction increases CFTR activity. Interacts with CSE1L. The core-glycosylated form interacts with GORASP2 (via PDZ GRASP-type 1 domain) in respone to ER stress. Interacts with MARCHF2; the interaction leads to CFTR ubiqtuitination and degradation. Interacts with ADGRG2. Post-translationally, N-glycosylated. In terms of processing, phosphorylated; cAMP treatment promotes phosphorylation and activates the channel. Dephosphorylation decreases the ATPase activity (in vitro). Phosphorylation at PKA sites activates the channel. Phosphorylation at PKC sites enhances the response to phosphorylation by PKA. Phosphorylated by AMPK; this inhibits channel activity. Ubiquitinated, leading to its degradation in the lysosome. Deubiquitination by USP10 in early endosomes enhances its endocytic recycling to the cell membrane. Ubiquitinated by RNF185 during ER stress. Ubiquitinated by MARCHF2.

It is found in the apical cell membrane. It localises to the early endosome membrane. Its subcellular location is the cell membrane. The protein localises to the recycling endosome membrane. The protein resides in the endoplasmic reticulum membrane. It is found in the nucleus. The enzyme catalyses ATP + H2O + closed Cl(-) channel = ADP + phosphate + open Cl(-) channel.. It carries out the reaction chloride(in) = chloride(out). The catalysed reaction is hydrogencarbonate(in) = hydrogencarbonate(out). It catalyses the reaction ATP + H2O = ADP + phosphate + H(+). Its function is as follows. Epithelial ion channel that plays an important role in the regulation of epithelial ion and water transport and fluid homeostasis. Mediates the transport of chloride ions across the cell membrane. Possesses an intrinsic ATPase activity and utilizes ATP to gate its channel; the passive flow of anions through the channel is gated by cycles of ATP binding and hydrolysis by the ATP-binding domains. The ion channel is also permeable to HCO(3)(-); selectivity depends on the extracellular chloride concentration. Exerts its function also by modulating the activity of other ion channels and transporters. Contributes to the regulation of the pH and the ion content of the epithelial fluid layer. Modulates the activity of the epithelial sodium channel (ENaC) complex, in part by regulating the cell surface expression of the ENaC complex. May regulate bicarbonate secretion and salvage in epithelial cells by regulating the transporter SLC4A7. Can inhibit the chloride channel activity of ANO1. Plays a role in the chloride and bicarbonate homeostasis during sperm epididymal maturation and capacitation. This Macaca nemestrina (Pig-tailed macaque) protein is Cystic fibrosis transmembrane conductance regulator.